The primary structure comprises 79 residues: RNA-binding protein Hfq (79 aa).

Residues 10 to 69 (DPFLNALRKEHVPVSIYLVNGIKLQGNIESFDQYVVLLRNTVTQMVYKHAISTVVPARAV) enclose the Sm domain.

Belongs to the Hfq family. In terms of assembly, homohexamer.

Functionally, RNA chaperone that binds small regulatory RNA (sRNAs) and mRNAs to facilitate mRNA translational regulation in response to envelope stress, environmental stress and changes in metabolite concentrations. Also binds with high specificity to tRNAs. The protein is RNA-binding protein Hfq of Ralstonia nicotianae (strain ATCC BAA-1114 / GMI1000) (Ralstonia solanacearum).